The sequence spans 167 residues: RNA pyrophosphohydrolase (167 aa).

The Nudix hydrolase domain maps to 7-160 (PYRPCVGVMV…KRRAYEEVVA (154 aa)). The short motif at 48–69 (GGIDEGEDPLEAACRELYEETG) is the Nudix box element.

This sequence belongs to the Nudix hydrolase family. RppH subfamily. Requires a divalent metal cation as cofactor.

Accelerates the degradation of transcripts by removing pyrophosphate from the 5'-end of triphosphorylated RNA, leading to a more labile monophosphorylated state that can stimulate subsequent ribonuclease cleavage. The polypeptide is RNA pyrophosphohydrolase (Rhizobium meliloti (strain 1021) (Ensifer meliloti)).